Reading from the N-terminus, the 39-residue chain is Photosystem II reaction center protein Y (39 aa).

A helical transmembrane segment spans residues Thr-4–Ile-22.

Belongs to the PsbY family. As to quaternary structure, PSII is composed of 1 copy each of membrane proteins PsbA, PsbB, PsbC, PsbD, PsbE, PsbF, PsbH, PsbI, PsbJ, PsbK, PsbL, PsbM, PsbT, PsbX, PsbY, Psb30/Ycf12, peripheral proteins PsbO, CyanoQ (PsbQ), PsbU, PsbV and a large number of cofactors. It forms dimeric complexes.

The protein localises to the cellular thylakoid membrane. Loosely associated component of the core of photosystem II (PSII), it is not always seen in crystals. PSII is a light-driven water plastoquinone oxidoreductase, using light energy to abstract electrons from H(2)O, generating a proton gradient subsequently used for ATP formation. The sequence is that of Photosystem II reaction center protein Y from Prochlorococcus marinus (strain MIT 9515).